A 503-amino-acid polypeptide reads, in one-letter code: Na(+)-translocating NADH-quinone reductase subunit B (503 aa).

Transmembrane regions (helical) follow at residues 55–75, 120–142, and 160–180; these read MMLVVIALMPTIFAAVWNSGL, IFLPLLFISYAVGGTCEVLFAII, and LILPPTIPYWMAALGIAFGVV. The residue at position 248 (Thr248) is an FMN phosphoryl threonine. 5 helical membrane-spanning segments follow: residues 361–381, 384–404, 417–437, 452–472, and 475–495; these read TSTVACLLGAGLLLLTGIASW, MLSFGLSAFFFAWFFKIMSIL, FFIPAYRHLCIGGLAFGLVFM, WLYGAFIGFLTILIRLINPAY, and GVMLAILLGNVFAPLFDNIAL.

This sequence belongs to the NqrB/RnfD family. As to quaternary structure, composed of six subunits; NqrA, NqrB, NqrC, NqrD, NqrE and NqrF. FMN serves as cofactor.

It localises to the cell inner membrane. It catalyses the reaction a ubiquinone + n Na(+)(in) + NADH + H(+) = a ubiquinol + n Na(+)(out) + NAD(+). NQR complex catalyzes the reduction of ubiquinone-1 to ubiquinol by two successive reactions, coupled with the transport of Na(+) ions from the cytoplasm to the periplasm. NqrA to NqrE are probably involved in the second step, the conversion of ubisemiquinone to ubiquinol. This is Na(+)-translocating NADH-quinone reductase subunit B from Chlamydia trachomatis serovar A (strain ATCC VR-571B / DSM 19440 / HAR-13).